A 582-amino-acid chain; its full sequence is BTB/POZ domain and ankyrin repeat-containing protein NPR1 (582 aa).

Residues 1-18 are compositionally biased toward polar residues; that stretch reads MEPPTSHVTNAFSDSDSA. Residues 1-25 form a disordered region; sequence MEPPTSHVTNAFSDSDSASVEEGGA. Residues 55 to 140 enclose the BTB domain; it reads ADARIAVPGG…VLDYLYSGRV (86 aa). Residues 147 to 161 form a C2HC NPR-type zinc finger; that stretch reads ACLCVDEDCAHVGCH. Residues Cys150, Cys155, His157, and Cys160 each coordinate Zn(2+). ANK repeat units follow at residues 229–258, 269–299, 301–328, and 332–361; these read RSNL…SLGL, KHVR…NLDD, FALH…DVNH, and RGYT…RPAD. The segment at 391 to 526 is salicylic acid-binding core (SBC); the sequence is PSPKDRLCIE…VLDKIMDDET (136 aa). A salicylate-binding site is contributed by Arg436. Residues 551–582 form a disordered region; it reads QKAFHEDKEENDRSGLSSSSSSTSIGAIRPRR. Over residues 553–563 the composition is skewed to basic and acidic residues; sequence AFHEDKEENDR. The span at 564 to 574 shows a compositional bias: low complexity; the sequence is SGLSSSSSSTS.

This sequence belongs to the plant 'ANKYRIN-BTB/POZ' family. 'NPR1-like' subfamily. Oligomer in an uninduced state; disulfide-linked. Forms activated monomer upon changes in cellular redox potential. Interacts with TGA2.1, TGA2.2, TGA2.3, LG2, TGAL1 and TGAL4. Interacts with NRR, RH1, RH2 and RH3.

The protein localises to the cytoplasm. It localises to the nucleus. The protein resides in the nuclear body. It participates in protein modification; protein ubiquitination. Its function is as follows. Salicylic acid (SA)-binding substrate-specific adapter of an E3 ubiquitin-protein ligase complex (CUL3-RBX1-BTB) which mediates the ubiquitination and subsequent proteasomal degradation of target proteins. Transcription cofactor that represses gene expression in the absence of salicylic acid (SA), when attached to negative cis-elements (W-box) with WRKY transcription factors, but stimulates gene expression upon activation by SA, when sumoylated and attached to positive cis-elements (as-1) with TGA transcription factors, thus confering immunity through a series of gene regulations ending in a significant increase in antimicrobial and defense genes expression. Key positive factor of disease resistance. Plays an essential role in benzothiadiazole (BTH)-induced resistance to the blast fungus disease caused by Magnaporthe oryzae. Involved in defense response against the bacterial blight disease caused by Xanthomonas oryzae pv. oryzae (Xoo). Over-expression of NPR1/NH1 confers disease resistance to Xoo, but also enhances herbivore susceptibility. Functions as a transcriptional coactivator of TGA2.1 and LG2 in vitro. Involved in defense response against herbivore. Plants silencing NPR1/NH1 have increased herbivore-induced trypsin proteinase inhibitors and volatiles, which reduces the performance of the striped stem borer (SSB) Chilo suppressalis. This chain is BTB/POZ domain and ankyrin repeat-containing protein NPR1, found in Oryza sativa subsp. japonica (Rice).